Here is a 130-residue protein sequence, read N- to C-terminus: Small ribosomal subunit protein uS9 (130 aa).

A disordered region spans residues 105-130; it reads TRDSRMKERKKPGLRGARRAPQFSKR. Positions 111–130 are enriched in basic residues; sequence KERKKPGLRGARRAPQFSKR.

It belongs to the universal ribosomal protein uS9 family.

The protein is Small ribosomal subunit protein uS9 of Lysinibacillus sphaericus (strain C3-41).